A 264-amino-acid polypeptide reads, in one-letter code: 5'-nucleotidase SurE (264 aa).

4 residues coordinate a divalent metal cation: aspartate 10, aspartate 11, serine 43, and asparagine 99.

It belongs to the SurE nucleotidase family. A divalent metal cation is required as a cofactor.

The protein localises to the cytoplasm. It carries out the reaction a ribonucleoside 5'-phosphate + H2O = a ribonucleoside + phosphate. Nucleotidase that shows phosphatase activity on nucleoside 5'-monophosphates. This Methanococcus vannielii (strain ATCC 35089 / DSM 1224 / JCM 13029 / OCM 148 / SB) protein is 5'-nucleotidase SurE.